We begin with the raw amino-acid sequence, 710 residues long: Polyribonucleotide nucleotidyltransferase (710 aa).

Mg(2+) contacts are provided by D489 and D495. Residues 556 to 615 form the KH domain; sequence PKIDTIKIDVDKIKVVIGKGGETIDKIIAETGVKIDIDDEGNVSIYSSDQAAIDRTKEII. The S1 motif domain maps to 625–693; that stretch reads GEVYHAKVIR…EKGRVDASMK (69 aa). The interval 691 to 710 is disordered; the sequence is SMKALIPRPPKPEKKEEKHD. The span at 700–710 shows a compositional bias: basic and acidic residues; it reads PKPEKKEEKHD.

It belongs to the polyribonucleotide nucleotidyltransferase family. Mg(2+) serves as cofactor.

Its subcellular location is the cytoplasm. The catalysed reaction is RNA(n+1) + phosphate = RNA(n) + a ribonucleoside 5'-diphosphate. In terms of biological role, involved in mRNA degradation. Catalyzes the phosphorolysis of single-stranded polyribonucleotides processively in the 3'- to 5'-direction. The sequence is that of Polyribonucleotide nucleotidyltransferase from Streptococcus pyogenes serotype M4 (strain MGAS10750).